The chain runs to 737 residues: Alpha-adducin (737 aa).

An N-acetylmethionine modification is found at M1. The segment at 1–21 is disordered; that stretch reads MNGDSRAAVVTSPPPTTAPHK. Position 12 is a phosphoserine (S12). Phosphoserine; by PKA is present on S59. Residue S64 is modified to Phosphoserine. The residue at position 331 (T331) is a Phosphothreonine. 5 positions are modified to phosphoserine: S334, S353, S355, S358, and S366. S408 carries the phosphoserine; by PKA modification. The span at 419–430 shows a compositional bias: polar residues; sequence YSFTSDGDSGTC. 2 disordered regions span residues 419–490 and 576–737; these read YSFT…NLFV and RREV…KSES. S427 is modified (phosphoserine). T429 bears the Phosphothreonine mark. Phosphoserine is present on S431. S436 carries the phosphoserine; by PKA modification. T445 carries the post-translational modification Phosphothreonine; by ROCK2. Phosphoserine occurs at positions 464 and 465. T480 bears the Phosphothreonine; by ROCK2 mark. S481 carries the phosphoserine; by PKA modification. A compositionally biased stretch (basic and acidic residues) spans 576 to 601; sequence RREVERKQKGSEENLDEAREQKEKSP. S586, S600, and S613 each carry phosphoserine. Residues 602 to 614 show a composition bias toward pro residues; it reads PDQPAVPYPPPST. T614 carries the post-translational modification Phosphothreonine. S678, S707, S710, and S714 each carry phosphoserine. Residues 687 to 714 show a composition bias toward low complexity; that stretch reads PVAEEAAPSAAEEGAAADPGSDGSPGKS. A compositionally biased stretch (basic residues) spans 715–737; it reads PSKKKKKFRTPSFLKKSKKKSES. S716 is subject to Phosphoserine; by PKC. Residues 717–734 form an interaction with calmodulin region; it reads KKKKKFRTPSFLKKSKKK. S726 carries the phosphoserine; by PKA and PKC modification.

The protein belongs to the aldolase class II family. Adducin subfamily. In terms of assembly, heterodimer of an alpha and a beta subunit or an alpha and a gamma subunit.

Its subcellular location is the cytoplasm. The protein resides in the cytoskeleton. The protein localises to the cell membrane. In terms of biological role, membrane-cytoskeleton-associated protein that promotes the assembly of the spectrin-actin network. Binds to calmodulin. The sequence is that of Alpha-adducin (ADD1) from Pongo abelii (Sumatran orangutan).